The following is a 371-amino-acid chain: Mitogen-activated protein kinase homolog MMK2 (371 aa).

The Protein kinase domain maps to 37 to 323; the sequence is VPPIRSVGRG…VDEALCHPYM (287 aa). Residues 43–51 and K66 contribute to the ATP site; that span reads VGRGAYGIV. The Proton acceptor role is filled by D163. T195 is subject to Phosphothreonine. A TXY motif is present at residues 195–197; sequence TEY. Y197 carries the phosphotyrosine modification.

The protein belongs to the protein kinase superfamily. CMGC Ser/Thr protein kinase family. MAP kinase subfamily. It depends on Mg(2+) as a cofactor. Post-translationally, dually phosphorylated on Thr-195 and Tyr-197, which activates the enzyme. Autophosphorylated.

It carries out the reaction L-seryl-[protein] + ATP = O-phospho-L-seryl-[protein] + ADP + H(+). The catalysed reaction is L-threonyl-[protein] + ATP = O-phospho-L-threonyl-[protein] + ADP + H(+). With respect to regulation, activated by tyrosine and threonine phosphorylation. The sequence is that of Mitogen-activated protein kinase homolog MMK2 (MMK2) from Medicago sativa (Alfalfa).